The sequence spans 196 residues: Probable nicotinate-nucleotide adenylyltransferase (196 aa).

It belongs to the NadD family.

It catalyses the reaction nicotinate beta-D-ribonucleotide + ATP + H(+) = deamido-NAD(+) + diphosphate. Its pathway is cofactor biosynthesis; NAD(+) biosynthesis; deamido-NAD(+) from nicotinate D-ribonucleotide: step 1/1. Catalyzes the reversible adenylation of nicotinate mononucleotide (NaMN) to nicotinic acid adenine dinucleotide (NaAD). The chain is Probable nicotinate-nucleotide adenylyltransferase from Caldicellulosiruptor saccharolyticus (strain ATCC 43494 / DSM 8903 / Tp8T 6331).